The primary structure comprises 505 residues: Histidine ammonia-lyase (505 aa).

Positions 141 to 143 (ASG) form a cross-link, 5-imidazolinone (Ala-Gly). Ser142 carries the post-translational modification 2,3-didehydroalanine (Ser).

It belongs to the PAL/histidase family. Contains an active site 4-methylidene-imidazol-5-one (MIO), which is formed autocatalytically by cyclization and dehydration of residues Ala-Ser-Gly.

It is found in the cytoplasm. It catalyses the reaction L-histidine = trans-urocanate + NH4(+). Its pathway is amino-acid degradation; L-histidine degradation into L-glutamate; N-formimidoyl-L-glutamate from L-histidine: step 1/3. In Bacillus cereus (strain G9842), this protein is Histidine ammonia-lyase.